Consider the following 201-residue polypeptide: Peptidyl-prolyl cis-trans isomerase FKBP11 (201 aa).

The N-terminal stretch at 1-27 (MTLRPSLLPLHLLLLLLLSAAVCRAEA) is a signal peptide. One can recognise a PPIase FKBP-type domain in the interval 57-144 (GDTLHIHYTG…QYDVELIALI (88 aa)). The helical transmembrane segment at 156 to 176 (ILPLVGMAMVPALLGLIGYHL) threads the bilayer.

Belongs to the FKBP-type PPIase family. In terms of assembly, interacts with IFITM5.

It is found in the membrane. It catalyses the reaction [protein]-peptidylproline (omega=180) = [protein]-peptidylproline (omega=0). In terms of biological role, PPIases accelerate the folding of proteins during protein synthesis. This Homo sapiens (Human) protein is Peptidyl-prolyl cis-trans isomerase FKBP11 (FKBP11).